The primary structure comprises 106 residues: Trp operon repressor homolog (106 aa).

The DNA-binding element occupies 59–82 (QREIQQILNTSAATITRGSNMIKI).

Belongs to the TrpR family. As to quaternary structure, homodimer.

It localises to the cytoplasm. Functionally, this protein is an aporepressor. When complexed with L-tryptophan it binds the operator region of the trp operon and prevents the initiation of transcription. This chain is Trp operon repressor homolog, found in Histophilus somni (strain 2336) (Haemophilus somnus).